A 79-amino-acid polypeptide reads, in one-letter code: Mycoredoxin 1 (79 aa).

The Glutaredoxin domain occupies 1 to 79 (MSNVTIYATD…EVIAKIEALA (79 aa)).

Belongs to the glutaredoxin family.

It localises to the cytoplasm. The enzyme catalyses [mycoredoxin]-L-cysteine + arseno-mycothiol + H(+) = [mycoredoxin]-S-mycothiol-L-cysteine + arsenite. In terms of biological role, involved in defense against toxic arsenate. Involved in the mycothiol/myoredoxin redox pathway which uses a mycothioltransferase mechanism; functions as a monothiol mixed disulfide reductase and is recycled by a second mycothiol forming mycothione which in turn is reduced in a NADPH-dependent manner. The polypeptide is Mycoredoxin 1 (mrx1) (Corynebacterium glutamicum (strain ATCC 13032 / K051)).